A 1141-amino-acid polypeptide reads, in one-letter code: LRR receptor-like serine/threonine-protein kinase RGI1 (1141 aa).

The signal sequence occupies residues 1 to 33; that stretch reads MSLHSLIFFSSSSSSLLFSFFFIFIFCFSLSDA. At 34–726 the chain is on the extracellular side; that stretch reads EQNPEASILY…DASRTRKLRL (693 aa). Cys-69 and Cys-77 form a disulfide bridge. The N-linked (GlcNAc...) asparagine glycan is linked to Asn-71. LRR repeat units lie at residues 80-104, 105-128, 130-152, 153-176, 178-200, 202-225, 226-249, 250-273, 275-297, 298-321, 322-345, 347-369, 370-392, 394-417, 418-441, 443-464, 465-489, 490-513, 514-537, 538-561, 563-585, 586-609, 610-634, 636-657, and 658-682; these read QGFI…LPAF, RSLQ…LGDC, GLKV…LSKL, RNLE…ISKC, KLKS…LGKL, GLEV…IGDC, SNLT…LGKL, KKLE…LGNC, ELVD…IGQL, TKLE…IGNC, SNLK…IGRL, FLEE…ISNC, SSLV…ELGT, TKLT…LADC, TDLQ…LFML, NLTK…EIGN, CSSL…IGSL, KKIN…IGSC, SELQ…VSSL, SGLQ…LGRL, SLNK…LGMC, SGLQ…LGDI, ENLE…IASL, KLSI…LANI, and ENLV…LFRQ. N-linked (GlcNAc...) asparagine glycosylation occurs at Asn-116. 2 short sequence motifs (small peptide recognition) span residues 185–186 and 207–210; these read FD and RIGG. Asn-227 carries N-linked (GlcNAc...) asparagine glycosylation. 2 short sequence motifs (small peptide recognition) span residues 230–235 and Tyr-258; that span reads VLGLAE. The N-linked (GlcNAc...) asparagine glycan is linked to Asn-272. The Small peptide recognition signature appears at 280 to 282; that stretch reads FLY. N-linked (GlcNAc...) asparagine glycosylation is present at Asn-320. 2 consecutive short sequence motifs (small peptide recognition) follow at residues 328–331 and 350–352; these read DLSL and EFM. Asn-368 is a glycosylation site (N-linked (GlcNAc...) asparagine). 2 short sequence motifs (small peptide recognition) span residues 398–402 and 424–427; these read LFFAW and DLSR. An N-linked (GlcNAc...) asparagine glycan is attached at Asn-443. The short motif at 446–450 is the Small peptide recognition element; that stretch reads KLLLI. Asn-464 is a glycosylation site (N-linked (GlcNAc...) asparagine). A Small peptide recognition motif is present at residues 470–472; sequence RLR. A glycan (N-linked (GlcNAc...) asparagine) is linked at Asn-523. A glycan (N-linked (GlcNAc...) asparagine) is linked at Asn-617. Asn-664 is a glycosylation site (N-linked (GlcNAc...) asparagine). A helical membrane pass occupies residues 727 to 747; sequence TLALLITLTVVLMILGAVAVI. The Cytoplasmic segment spans residues 748-1141; that stretch reads RARRNIDNER…LLYSSSSSIE (394 aa). In terms of domain architecture, Protein kinase spans 786–1074; it reads LVEPNVIGKG…EIKQEREEYA (289 aa). ATP-binding positions include 792-800 and Lys-814; that span reads IGKGCSGVV. A phosphotyrosine mark is found at Tyr-868 and Tyr-906. Asp-919 functions as the Proton acceptor in the catalytic mechanism. Residues Tyr-962 and Tyr-969 each carry the phosphotyrosine modification.

The protein belongs to the protein kinase superfamily. Ser/Thr protein kinase family. As to quaternary structure, interacts with beet curly top virus AL4/C4. Binds to RGF peptides such as RGF1, GLV5/CLEL1/RGF2, GLV7/CLEL3/RGF3, GLV3/RGF4, GLV10/CLEL7/RGF5 and RGF10/CLELN; these interactions trigger the formation of heterodimers with SERK1, SERK2 or BAK1/SERK3 via LRR regions. Interacts with UBP13. In terms of processing, phosphorylated and ubiquitinated upon interaction with RGF1, thus leading to activation a subsequent degradation. Stabilized by UBP12 and UBP13-mediated deubiquitination. Post-translationally, autophosphorylated. In terms of tissue distribution, expressed in roots.

The protein resides in the cell membrane. It catalyses the reaction L-seryl-[protein] + ATP = O-phospho-L-seryl-[protein] + ADP + H(+). The enzyme catalyses L-threonyl-[protein] + ATP = O-phospho-L-threonyl-[protein] + ADP + H(+). In terms of biological role, together with RGI2, RGI3, RGI4 and RGI5, acts as a receptor of RGF peptides (e.g. RGF1, GLV5/CLEL1/RGF2, GLV7/CLEL3/RGF3, GLV3/RGF4, GLV10/CLEL7/RGF5 and RGF10/CLELN), peptide hormones which maintain the postembryonic root stem cell niche by regulating the expression levels and patterns of the transcription factor PLETHORA (PLT, e.g. PLT1 and PLT2). Links RGF peptides signal with their downstream components. This Arabidopsis thaliana (Mouse-ear cress) protein is LRR receptor-like serine/threonine-protein kinase RGI1.